The sequence spans 386 residues: MDSSDDEIACDEGDYKGAKDDNDLPHGLGKVKFSSGDEFIGAFEHGIKCGPGKFHFFDDSTLEGNYVDGELHGIGIYTNDDGSITKSTYCEGVMEGPSWEYDPEGNITFRGQYSEGVRCGLCFYYFPDGGSLIGNVNASGDLSADNIAYIYPDRTTALIGSFEEGDMITAKEANVTITGEKGEEISFPTVNSISPDPVYRLDVSTPHVISTRPLVPDPYESELVYAAPSKIPNAGEGLYAKCDVDQDTVMAFYNGVRLKQDEVENRDWSQNSNTISLTDDIAIDVPEEYVSTDNYCASLGHKVNHSFDPNCRYDIYQHPRFGFIKCVRTIRGVSEGDELTVHYTYEHNDGNKTREAEAPEWYKSQLKVFGVDRPAEILENMDEDYC.

Positions 1–12 are enriched in acidic residues; it reads MDSSDDEIACDE. Residues 1 to 21 are disordered; the sequence is MDSSDDEIACDEGDYKGAKDD. 4 MORN repeats span residues 15-38, 39-61, 62-84, and 109-131; these read YKGA…SGDE, FIGA…DDST, LEGN…DGSI, and FRGQ…DGGS. The region spanning 222-344 is the SET domain; sequence ELVYAAPSKI…EGDELTVHYT (123 aa). Residues 234–236, Asn-304, and His-305 each bind S-adenosyl-L-methionine; that span reads AGE.

The protein belongs to the class V-like SAM-binding methyltransferase superfamily. Histone-lysine methyltransferase family. SET7 subfamily.

It localises to the nucleus. It is found in the chromosome. It catalyses the reaction L-lysyl(4)-[histone H3] + S-adenosyl-L-methionine = N(6)-methyl-L-lysyl(4)-[histone H3] + S-adenosyl-L-homocysteine + H(+). The enzyme catalyses L-lysyl-[protein] + S-adenosyl-L-methionine = N(6)-methyl-L-lysyl-[protein] + S-adenosyl-L-homocysteine + H(+). In terms of biological role, histone methyltransferase that specifically monomethylates 'Lys-4' of histone H3. H3 'Lys-4' methylation represents a specific tag for epigenetic transcriptional activation. Plays a central role in the transcriptional activation of genes. Also has methyltransferase activity toward non-histone proteins. This chain is Histone-lysine N-methyltransferase SETD7 (setd7), found in Halocynthia roretzi (Sea squirt).